Here is a 361-residue protein sequence, read N- to C-terminus: Phospho-N-acetylmuramoyl-pentapeptide-transferase (361 aa).

10 consecutive transmembrane segments (helical) span residues 28 to 48 (LAIIITLSLSFIMGPILIKFL), 74 to 94 (TMGGIMIILSSGLSTLLLADL), 99 to 119 (IWITLFGFISFGIIGFMDDYA), 133 to 153 (SKLVLQGIISLIICVLLEYLD), 168 to 188 (LNLDLGYFYIVFAIFVIVGSS), 203 to 223 (VPIAFTAGSFALISYLVGNLI), 236 to 256 (TGELTVLCAGLVGSCLGFLWF), 263 to 283 (VFMGDTGSLSLGGVLGIISVI), 288 to 308 (IVLAIVGGLFVIETASVILQV), and 338 to 358 (KVVIRFWIISVIFALIGLSSL).

Belongs to the glycosyltransferase 4 family. MraY subfamily. Mg(2+) serves as cofactor.

It localises to the cell inner membrane. It catalyses the reaction UDP-N-acetyl-alpha-D-muramoyl-L-alanyl-gamma-D-glutamyl-meso-2,6-diaminopimeloyl-D-alanyl-D-alanine + di-trans,octa-cis-undecaprenyl phosphate = di-trans,octa-cis-undecaprenyl diphospho-N-acetyl-alpha-D-muramoyl-L-alanyl-D-glutamyl-meso-2,6-diaminopimeloyl-D-alanyl-D-alanine + UMP. The protein operates within cell wall biogenesis; peptidoglycan biosynthesis. In terms of biological role, catalyzes the initial step of the lipid cycle reactions in the biosynthesis of the cell wall peptidoglycan: transfers peptidoglycan precursor phospho-MurNAc-pentapeptide from UDP-MurNAc-pentapeptide onto the lipid carrier undecaprenyl phosphate, yielding undecaprenyl-pyrophosphoryl-MurNAc-pentapeptide, known as lipid I. In Rickettsia akari (strain Hartford), this protein is Phospho-N-acetylmuramoyl-pentapeptide-transferase.